The sequence spans 505 residues: Trans-cinnamate 4-monooxygenase (505 aa).

Residues 3 to 23 form a helical membrane-spanning segment; sequence LLLLEKTLLGLFLAAVVAIVV. (E)-cinnamate-binding positions include 213–218 and alanine 306; that span reads RSRLAQ. Position 447 (cysteine 447) interacts with heme.

This sequence belongs to the cytochrome P450 family. Requires heme as cofactor.

The protein resides in the membrane. It catalyses the reaction (E)-cinnamate + reduced [NADPH--hemoprotein reductase] + O2 = (E)-4-coumarate + oxidized [NADPH--hemoprotein reductase] + H2O + H(+). Its pathway is phenylpropanoid metabolism; trans-4-coumarate biosynthesis; trans-4-coumarate from trans-cinnamate: step 1/1. Its function is as follows. Catalyzes the first oxidative step of the phenylpropanoid pathway in higher plants by transforming trans-cinnamate into p-coumarate. The compounds formed by this pathway are essential components for lignification, pollination, and defense against ultraviolet light, predators and pathogens. The sequence is that of Trans-cinnamate 4-monooxygenase (CYP73A2) from Vigna radiata var. radiata (Mung bean).